The chain runs to 410 residues: Peptidase T (410 aa).

Zn(2+) is bound at residue His-79. Residue Asp-81 is part of the active site. Asp-142 contacts Zn(2+). Residue Glu-176 is the Proton acceptor of the active site. Zn(2+) is bound by residues Glu-177, Asp-199, and His-381.

It belongs to the peptidase M20B family. Zn(2+) serves as cofactor.

It localises to the cytoplasm. It carries out the reaction Release of the N-terminal residue from a tripeptide.. Its function is as follows. Cleaves the N-terminal amino acid of tripeptides. The protein is Peptidase T of Bacillus mycoides (strain KBAB4) (Bacillus weihenstephanensis).